Consider the following 4655-residue polypeptide: Low-density lipoprotein receptor-related protein 2 (4655 aa).

An N-terminal signal peptide occupies residues 1–25 (MDRGPAAVACTLLLALVACLAPASG). Topologically, residues 26–4423 (QECDSAHFRC…FSKGISPGTT (4398 aa)) are extracellular. 7 consecutive LDL-receptor class A domains span residues 27-63 (ECDSAHFRCGSGHCIPADWRCDGTKDCSDDADEIGCA), 66-104 (TCQQGYFKCQSEGQCIPNSWVCDQDQDCDDGSDERQDCS), 107-143 (TCSSHQITCSNGQCIPSEYRCDHVRDCPDGADENDCQ), 146-180 (TCEQLTCDNGACYNTSQKCDWKVDCRDSSDEINCT), 182-218 (ICLHNEFSCGNGECIPRAYVCDHDNDCQDGSDEHACN), 221-257 (TCGGYQFTCPSGRCIYQNWVCDGEDDCKDNGDEDGCE), and 265-308 (KCSP…KYCS). Disulfide bonds link C28–C40, C35–C53, C47–C62, C67–C80, C74–C93, C87–C103, C108–C120, C115–C133, C127–C142, C147–C157, C152–C170, C164–C179, C183–C195, C190–C208, C202–C217, C222–C234, C229–C247, C241–C256, C266–C279, C273–C292, and C286–C307. N-linked (GlcNAc...) asparagine glycosylation is found at N159 and N178. 5 N-linked (GlcNAc...) asparagine glycosylation sites follow: N299, N300, N341, N388, and N463. LDL-receptor class B repeat units follow at residues 436–478 (QRVF…DWVN), 479–521 (NKIY…DPTV), 522–568 (GYLF…DMIS), 569–613 (KRVY…FEGQ), 753–795 (STIF…DWIS), 796–837 (KNLY…HPFA), 838–881 (GYLF…DWAA), and 882–925 (SRLY…FGEH). N-linked (GlcNAc...) asparagine glycosylation is present at N866. An LDL-receptor class A 8 domain is found at 1025–1061 (QCGLFSFPCKNGRCVPNYYLCDGVDDCHDNSDEQLCG). Intrachain disulfides connect C1026–C1038, C1033–C1051, and C1045–C1060. N1064 carries N-linked (GlcNAc...) asparagine glycosylation. LDL-receptor class A domains are found at residues 1066 to 1102 (TCSSSAFTCGHGECIPAHWRCDKRNDCVDGSDEHNCP), 1108 to 1144 (SCLDTQYTCDNHQCISKNWVCDTDNDCGDGSDEKNCN), 1148 to 1184 (TCQPSQFNCPNHRCIDLSFVCDGDKDCVDGSDEVGCV), 1186 to 1223 (NCTASQFKCASGDKCIGVTNRCDGVFDCSDNSDEAGCP), 1229 to 1267 (MCHSDEFQCQEDGICIPNFWECDGHPDCLYGSDEHNACV), 1270 to 1306 (TCPSSYFHCDNGNCIHRAWLCDRDNDCGDMSDEKDCP), and 1304 to 1349 (DCPT…PLCN). 6 disulfides stabilise this stretch: C1067–C1079, C1074–C1092, C1086–C1101, C1109–C1121, C1116–C1134, and C1128–C1143. W1126, D1129, D1131, D1133, D1139, and E1140 together coordinate Ca(2+). N-linked (GlcNAc...) asparagine glycosylation occurs at N1144. Intrachain disulfides connect C1149–C1161, C1156–C1174, and C1168–C1183. N-linked (GlcNAc...) asparagine glycosylation occurs at N1186. 12 disulfides stabilise this stretch: C1187–C1200, C1194–C1213, C1207–C1222, C1230–C1243, C1237–C1256, C1250–C1266, C1271–C1283, C1278–C1296, C1290–C1305, C1305–C1325, C1312–C1338, and C1332–C1348. Residues D1208, V1210, D1212, D1218, and E1219 each coordinate Ca(2+). 3 N-linked (GlcNAc...) asparagine glycosylation sites follow: N1327, N1340, and N1383. An EGF-like 1; calcium-binding domain is found at 1390 to 1429 (DIDECDILGSCSQHCYNMRGSFRCSCDTGYMLESDGRTCK). 3 disulfides stabilise this stretch: C1394-C1404, C1400-C1413, and C1415-C1428. N-linked (GlcNAc...) asparagine glycans are attached at residues N1464, N1496, and N1550. LDL-receptor class B repeat units follow at residues 1478 to 1520 (GRIF…DWVG), 1521 to 1563 (RNLY…DPRM), 1566 to 1609 (HLLF…DYPN), 1610 to 1654 (RLLY…FEDS), and 1655 to 1695 (VYWT…VHPS). Residue N1675 is glycosylated (N-linked (GlcNAc...) asparagine). One can recognise an EGF-like 2 domain in the interval 1700-1741 (SVNPCAFSRCSHLCLLSSQGPHFYSCVCPSGWSLSPDLLNCL). Cystine bridges form between C1704–C1713, C1709–C1725, and C1727–C1740. LDL-receptor class B repeat units lie at residues 1790–1832 (QYIY…DWIS), 1833–1882 (RNLY…DPAR), 1883–1930 (GKLY…DIEE), 1931–1972 (QKLY…HDSF), and 1973–2013 (LYYT…YHRR). N1810 is a glycosylation site (N-linked (GlcNAc...) asparagine). The N-linked (GlcNAc...) asparagine glycan is linked to N2055. 9 LDL-receptor class B repeats span residues 2107–2156 (GFIY…DWVA), 2157–2201 (GNLY…DPKN), 2202–2245 (RYLF…DRSD), 2246–2289 (GYVY…FENS), 2431–2477 (DRIY…DWIT), 2478–2518 (RRIY…DPCQ), 2519–2562 (GYLY…DYEE), 2563–2604 (DLLY…YGQY), and 2605–2646 (IYWT…VVKN). Residues N2177 and N2224 are each glycosylated (N-linked (GlcNAc...) asparagine). 2 N-linked (GlcNAc...) asparagine glycosylation sites follow: N2499 and N2547. LDL-receptor class A domains lie at 2699-2737 (RCGASSFTCSNGRCISEEWKCDNDNDCGDGSDEMESVCA), 2740-2776 (TCSPTAFTCANGRCVQYSYRCDYYNDCGDGSDEAGCL), 2779-2818 (DCNATTEFMCNNRRCIPREFICNGVDNCHDNNTSDEKNCP), 2821-2860 (TCQSGYTKCHNSNICIPRVYLCDGDNDCGDNSDENPTYCT), 2863-2900 (TCSSSEFQCASGRCIPQHWYCDQETDCFDASDEPASCG), 2905-2944 (TCLADEFKCDGGRCIPSEWICDGDNDCGDMSDEDKRHQCQ), 2947-2989 (NCSD…QNCT), 2992-3028 (TCSENEFTCGYGLCIPKIFRCDRHNDCGDYSDERGCL), 3031-3069 (TCQQNQFTCQNGRCISKTFVCDEDNDCGDGSDELMHLCH), and 3074-3110 (TCPPHEFKCDNGRCIEMMKLCNHLDDCLDNSDEKGCG). Intrachain disulfides connect C2700/C2712, C2707/C2725, C2719/C2736, C2741/C2753, C2748/C2766, C2760/C2775, C2780/C2793, C2788/C2806, C2800/C2817, C2822/C2835, C2829/C2848, C2842/C2859, C2864/C2876, C2871/C2889, C2883/C2899, C2906/C2918, C2913/C2931, and C2925/C2943. An N-linked (GlcNAc...) asparagine glycan is attached at N2781. N-linked (GlcNAc...) asparagine glycans are attached at residues N2809 and N2810. N-linked (GlcNAc...) asparagine glycosylation is present at N2947. 18 disulfides stabilise this stretch: C2948-C2965, C2955-C2978, C2972-C2988, C2993-C3005, C3000-C3018, C3012-C3027, C3032-C3044, C3039-C3057, C3051-C3068, C3075-C3087, C3082-C3100, C3094-C3109, C3114-C3126, C3122-C3135, C3137-C3150, C3156-C3167, C3163-C3176, and C3178-C3191. A glycan (N-linked (GlcNAc...) asparagine) is linked at N2987. Residues 3110 to 3151 (GINECHDPSISGCDHNCTDTLTSFYCSCRPGYKLMSDKRTCV) enclose the EGF-like 3 domain. N3125 carries N-linked (GlcNAc...) asparagine glycosylation. Positions 3152 to 3192 (DIDECTEMPFVCSQKCENVIGSYICKCAPGYLREPDGKTCR) constitute an EGF-like 4; calcium-binding domain. 4 N-linked (GlcNAc...) asparagine glycosylation sites follow: N3211, N3257, N3315, and N3355. LDL-receptor class B repeat units follow at residues 3239–3281 (KRLY…DWVS), 3282–3324 (RKLY…DNPR), 3333–3376 (GYLY…DYTN), 3377–3419 (DLLY…FEDT), and 3420–3460 (IYWT…YHPY). N3446 is a glycosylation site (N-linked (GlcNAc...) asparagine). LDL-receptor class A domains follow at residues 3511–3549 (MCSSTQFLCANNEKCIPIWWKCDGQKDCSDGSDELALCP), 3552–3590 (FCRLGQFQCSDGNCTSPQTLCNAHQNCPDGSDEDRLLCE), 3593–3631 (HCDSNEWQCANKRCIPESWQCDTFNDCEDNSDEDSSHCA), 3634–3672 (TCRPGQFRCANGRCIPQAWKCDVDNDCGDHSDEPIEECM), 3677–3715 (LCDNFTEFSCKTNYRCIPKWAVCNGVDDCRDNSDEQGCE), 3718–3755 (TCHPVGDFRCKNHHCIPLRWQCDGQNDCGDNSDEENCA), 3758–3794 (ECTESEFRCVNQQCIPSRWICDHYNDCGDNSDERDCE), 3797–3833 (TCHPEYFQCTSGHCVHSELKCDGSADCLDASDEADCP), 3841–3879 (YCQATMFECKNHVCIPPYWKCDGDDDCGDGSDEELHLCL), 3882–3921 (PCNSPNRFRCDNNRCIYSHEVCNGVDDCGDGTDETEEHCR), and 3927–3963 (PCTEYEYKCGNGHCIPHDNVCDDADDCGDWSDELGCN). 33 disulfides stabilise this stretch: C3512/C3525, C3519/C3538, C3532/C3548, C3553/C3565, C3560/C3578, C3572/C3589, C3594/C3606, C3601/C3619, C3613/C3630, C3635/C3647, C3642/C3660, C3654/C3671, C3678/C3692, C3686/C3705, C3699/C3714, C3719/C3732, C3727/C3745, C3739/C3754, C3759/C3771, C3766/C3784, C3778/C3793, C3798/C3810, C3805/C3823, C3817/C3832, C3842/C3854, C3849/C3867, C3861/C3878, C3883/C3896, C3891/C3909, C3903/C3920, C3928/C3940, C3935/C3953, and C3947/C3962. N-linked (GlcNAc...) asparagine glycosylation occurs at N3564. N3680 carries an N-linked (GlcNAc...) asparagine glycan. N-linked (GlcNAc...) asparagine glycosylation occurs at N3978. Residues 4007–4048 (DINECEQFGTCPQHCRNTKGSYECVCADGFTSMSDRPGKRCA) enclose the EGF-like 5; calcium-binding domain. 3 disulfide bridges follow: C4011/C4021, C4017/C4030, and C4032/C4047. A glycan (N-linked (GlcNAc...) asparagine) is linked at N4068. LDL-receptor class B repeat units lie at residues 4154–4196 (RHIY…NPKL), 4197–4240 (GLMF…DYLN), and 4242–4283 (DRIY…FEDQ). The N-linked (GlcNAc...) asparagine glycan is linked to N4327. Residues 4377–4411 (LPPPCRCMHGGNCYFDETDLPKCKCPSGYTGKYCE) form the EGF-like 6 domain. Disulfide bonds link C4381/C4389, C4383/C4399, and C4401/C4410. The chain crosses the membrane as a helical span at residues 4424 to 4446 (AVAVLLTILLIVVIGALAIAGFF). Topologically, residues 4447-4655 (HYRRTGSLLP…ANLVKEDSEV (209 aa)) are cytoplasmic. The SH3-binding signature appears at 4453–4462 (SLLPALPKLP). Positions 4456-4461 (PALPKL) match the PxLPxI/L motif 1; mediates interaction with ANKRA2 motif. Residues 4459-4464 (PKLPSL) carry the PxLPxI/L motif 2; mediates interaction with ANKRA2 motif. Residues S4463 and S4466 each carry the phosphoserine modification. The short motif at 4521–4526 (FENPMY) is the Endocytosis signal element. The tract at residues 4550–4574 (KNYGSPINPSEIVPETNPTSPAADG) is disordered. Positions 4565 to 4574 (TNPTSPAADG) are enriched in polar residues. S4569 bears the Phosphoserine mark. The interval 4589-4602 (QTTNFENPIYAQME) is interaction with DAB2. Positions 4595-4598 (NPIY) match the NPXY motif motif. An SH2-binding motif is present at residues 4598-4601 (YAQM). The interval 4601 to 4655 (MENEQKESVAATPPPSPSLPAKPKPPSRRDPTPTYSATEDTFKDTANLVKEDSEV) is disordered. An SH3-binding motif is present at residues 4611–4622 (ATPPPSPSLPAK). The segment covering 4612–4624 (TPPPSPSLPAKPK) has biased composition (pro residues). S4616 is modified (phosphoserine). At T4632 the chain carries Phosphothreonine. Position 4653 is a phosphoserine (S4653).

It belongs to the LDLR family. Binds plasminogen, extracellular matrix components, plasminogen activator-plasminogen activator inhibitor type I complex, apolipoprotein E-enriched beta-VLDL, lipoprotein lipase, lactoferrin, CLU/clusterin and calcium. Forms a multimeric complex together with LRPAP1. Interacts (via PxLPxI/L motif) with ANKRA2 (via ankyrin repeats). Interacts with LRP2BP. Interacts (via NPXY motif) with DAB2; the interaction is not affected by tyrosine phosphorylation of the NPXY motif. Interacts with MB. Interacts with BMP4. Interacts with the Sonic hedgehog protein N-product which is the active product of SHH. Interacts with CST3 in a calcium-dependent manner. Interacts with the vitamin-D binding protein GC/DBP. Interacts with sex hormone-binding protein SHBG. Interacts with angiotensin-2. Also interacts with angiotensin 1-7. Interacts with APOM. Interacts with selenoprotein SEPP1. Interacts with LEP. Interacts with ALB. Interacts with the antiapoptotic protein BIRC5/survivin. Interacts with matrix metalloproteinase MMP2 in complex with metalloproteinase inhibitor TIMP1. In neurons, forms a trimeric complex with APP and APPB1/FE65. Interacts with LDLRAP1/ARH; mediates trafficking of LRP2 to the endocytic recycling compartment. Does not interact with beta-amyloid protein 40 alone but interacts with the complex composed of beta-amyloid protein 40 and CLU/APOJ. Interacts with MDK. Post-translationally, a fraction undergoes proteolytic cleavage of the extracellular domain at the cell membrane to generate a cytoplasmic tail fragment. This is internalized into the early endosome from where it trafficks in an LDLRAP1/ARH-dependent manner to the endocytic recycling compartment (ERC). In the ERC, it is further cleaved by gamma-secretase to release a fragment which translocates to the nucleus and mediates transcriptional repression. N-glycosylation is required for ligand binding. In terms of tissue distribution, expressed in first and third trimester cytotrophoblasts in the placenta (at protein level). Absorptive epithelia, including renal proximal tubules.

It is found in the apical cell membrane. Its subcellular location is the endosome lumen. The protein resides in the membrane. The protein localises to the coated pit. It localises to the cell projection. It is found in the dendrite. Its subcellular location is the axon. In terms of biological role, multiligand endocytic receptor. Acts together with CUBN to mediate endocytosis of high-density lipoproteins. Mediates receptor-mediated uptake of polybasic drugs such as aprotinin, aminoglycosides and polymyxin B. In the kidney, mediates the tubular uptake and clearance of leptin. Also mediates transport of leptin across the blood-brain barrier through endocytosis at the choroid plexus epithelium. Endocytosis of leptin in neuronal cells is required for hypothalamic leptin signaling and leptin-mediated regulation of feeding and body weight. Mediates endocytosis and subsequent lysosomal degradation of CST3 in kidney proximal tubule cells. Mediates renal uptake of 25-hydroxyvitamin D3 in complex with the vitamin D3 transporter GC/DBP. Mediates renal uptake of metallothionein-bound heavy metals. Together with CUBN, mediates renal reabsorption of myoglobin. Mediates renal uptake and subsequent lysosomal degradation of APOM. Plays a role in kidney selenium homeostasis by mediating renal endocytosis of selenoprotein SEPP1. Mediates renal uptake of the antiapoptotic protein BIRC5/survivin which may be important for functional integrity of the kidney. Mediates renal uptake of matrix metalloproteinase MMP2 in complex with metalloproteinase inhibitor TIMP1. Mediates endocytosis of Sonic hedgehog protein N-product (ShhN), the active product of SHH. Also mediates ShhN transcytosis. In the embryonic neuroepithelium, mediates endocytic uptake and degradation of BMP4, is required for correct SHH localization in the ventral neural tube and plays a role in patterning of the ventral telencephalon. Required at the onset of neurulation to sequester SHH on the apical surface of neuroepithelial cells of the rostral diencephalon ventral midline and to control PTCH1-dependent uptake and intracellular trafficking of SHH. During neurulation, required in neuroepithelial cells for uptake of folate bound to the folate receptor FOLR1 which is necessary for neural tube closure. In the adult brain, negatively regulates BMP signaling in the subependymal zone which enables neurogenesis to proceed. In astrocytes, mediates endocytosis of ALB which is required for the synthesis of the neurotrophic factor oleic acid. Involved in neurite branching. During optic nerve development, required for SHH-mediated migration and proliferation of oligodendrocyte precursor cells. Mediates endocytic uptake and clearance of SHH in the retinal margin which protects retinal progenitor cells from mitogenic stimuli and keeps them quiescent. Plays a role in reproductive organ development by mediating uptake in reproductive tissues of androgen and estrogen bound to the sex hormone binding protein SHBG. Mediates endocytosis of angiotensin-2. Also mediates endocytosis of angiotensis 1-7. Binds to the complex composed of beta-amyloid protein 40 and CLU/APOJ and mediates its endocytosis and lysosomal degradation. Required for embryonic heart development. Required for normal hearing, possibly through interaction with estrogen in the inner ear. This Homo sapiens (Human) protein is Low-density lipoprotein receptor-related protein 2.